Reading from the N-terminus, the 195-residue chain is Antigenic thaumatin-like protein ARB_01183 (195 aa).

Positions 1–22 (MHSNTAVIALSALAALVPAALA) are cleaved as a signal peptide. 2 cysteine pairs are disulfide-bonded: Cys125–Cys153 and Cys130–Cys137. The segment at 171–195 (GPKKMFKPVQEKAANRPRHPHARPE) is disordered. Residues 185–195 (NRPRHPHARPE) are compositionally biased toward basic residues.

It belongs to the thaumatin family.

It localises to the secreted. Its function is as follows. Might be involved in the inhibition of growth of fungal competitors and pathogenicity. This Arthroderma benhamiae (strain ATCC MYA-4681 / CBS 112371) (Trichophyton mentagrophytes) protein is Antigenic thaumatin-like protein ARB_01183.